Reading from the N-terminus, the 407-residue chain is Aminomethyltransferase, mitochondrial (407 aa).

Residues 1–29 (MRGGLWQLGQSITRRLGQSDKKTIVRRCY) constitute a mitochondrion transit peptide. Substrate contacts are provided by glutamate 234, arginine 265, and tyrosine 403.

The protein belongs to the GcvT family. In terms of assembly, the glycine cleavage system is composed of four proteins: P, T, L and H.

Its subcellular location is the mitochondrion. The enzyme catalyses N(6)-[(R)-S(8)-aminomethyldihydrolipoyl]-L-lysyl-[protein] + (6S)-5,6,7,8-tetrahydrofolate = N(6)-[(R)-dihydrolipoyl]-L-lysyl-[protein] + (6R)-5,10-methylene-5,6,7,8-tetrahydrofolate + NH4(+). Its function is as follows. The glycine cleavage system catalyzes the degradation of glycine. The protein is Aminomethyltransferase, mitochondrial (GDCST) of Flaveria anomala (Yellowtops).